Consider the following 501-residue polypeptide: Pentatricopeptide repeat-containing protein At2g36730 (501 aa).

PPR repeat units lie at residues 77–111 (TPST…GIKP), 112–146 (NKLT…GFDF), 147–177 (DVYV…MTER), 178–212 (NVVS…RFCP), 213–243 (DETT…VREL), 246–276 (NCRL…MVDK), 277–312 (NVWT…SVRP), 313–343 (NYVT…MEKI), and 349–379 (MMIH…MPFE). The tract at residues 384 to 462 (VWRTLLSACS…IAGESCLELG (79 aa)) is type E motif. The segment at 463–493 (GSFHRFFSGYDPRSEYVSIYELLDLFKFQLT) is type E(+) motif.

Belongs to the PPR family. PCMP-E subfamily.

This is Pentatricopeptide repeat-containing protein At2g36730 (PCMP-E44) from Arabidopsis thaliana (Mouse-ear cress).